A 101-amino-acid chain; its full sequence is Integration host factor subunit alpha (101 aa).

Belongs to the bacterial histone-like protein family. In terms of assembly, heterodimer of an alpha and a beta chain.

Its function is as follows. This protein is one of the two subunits of integration host factor, a specific DNA-binding protein that functions in genetic recombination as well as in transcriptional and translational control. The polypeptide is Integration host factor subunit alpha (Alkalilimnicola ehrlichii (strain ATCC BAA-1101 / DSM 17681 / MLHE-1)).